The primary structure comprises 214 residues: MSRYRGPRVKKIKRLGSLPGLTTKKPPIVVRDPRKLSRPKPKKKSQYRIRLEEKQKLRFHYGLTERQLLKYVRIAGKAKGPTGQVLLQLLEMRLDNTLFRLGMASTIPQARQLVNHRHILVNGRIVDIPSYRCKPRDLISGREKEKSKALIQNYLDSTAKRPIPLPKHLLLFHSDDPRDLLKGSVKKIIDRKEVGLKKIKELLVIEYYSRQISP.

Basic residues-rich tracts occupy residues Met-1–Arg-14 and Leu-36–Gln-46. Residues Met-1–Gln-46 form a disordered region. In terms of domain architecture, S4 RNA-binding spans Met-92–Asn-153.

The protein belongs to the universal ribosomal protein uS4 family. Part of the 30S ribosomal subunit. Contacts protein S5. The interaction surface between S4 and S5 is involved in control of translational fidelity.

The protein localises to the plastid. It is found in the chloroplast. Its function is as follows. One of the primary rRNA binding proteins, it binds directly to 16S rRNA where it nucleates assembly of the body of the 30S subunit. With S5 and S12 plays an important role in translational accuracy. This is Small ribosomal subunit protein uS4c (rps4) from Pelargonium hortorum (Common geranium).